Here is a 759-residue protein sequence, read N- to C-terminus: Probable Na(+)/H(+) antiporter C3A11.09 (759 aa).

11 consecutive transmembrane segments (helical) span residues 12 to 32 (HLAYAIIGGFTSLFMLCSLII), 36 to 56 (LFLGEATMATATGLIFGPYVA), 105 to 125 (MLLPVMIFGWLVSTGFMYALI), 133 to 153 (SLAIAACITATDPVLASSIVG), 172 to 192 (ESGCNDGMAIPFLYLAIYLII), 206 to 226 (IIILYECTFGCVLGAIIGVIA), 244 to 264 (FLVFYFVLALFCGGIGTIIGV), 295 to 315 (VIDLLLNLSFFVYVGAIMPWP), 319 to 339 (MPHMDLSVWRLVVLAICILIA), 361 to 381 (ALFAGHFGPIGVGALYTCLVA), and 415 to 435 (VVCFLVLSSIIVHGSSIAFFM). At Thr-442 the chain carries Phosphothreonine. Position 446 is a phosphoserine (Ser-446). A Phosphothreonine modification is found at Thr-448. 5 stretches are compositionally biased toward basic and acidic residues: residues 514-529 (LREERAESPRGGHYDA), 537-547 (YESRQPRRSNE), 590-601 (IDEKLAQGDPKA), 622-647 (NLHEPDDERQREPTLGHIESSIENHR), and 655-671 (SESHLRENSVERRRREQ). 3 disordered regions span residues 514 to 558 (LREE…NPGD), 578 to 606 (SHTSSRDANGPSIDEKLAQGDPKAKSFGR), and 622 to 759 (NLHE…RAWE). The span at 696–713 (NENNESSSDTRNGLLSDN) shows a compositional bias: polar residues. N-linked (GlcNAc...) asparagine glycosylation is found at Asn-699 and Asn-713. The segment covering 724–733 (RAPSAAVSSE) has biased composition (low complexity). Ser-735 is subject to Phosphoserine.

The protein belongs to the fungal Na(+)/H(+) exchanger family.

It is found in the membrane. Its function is as follows. Sodium export from cell, takes up external protons in exchange for internal sodium ions. The protein is Probable Na(+)/H(+) antiporter C3A11.09 (sod22) of Schizosaccharomyces pombe (strain 972 / ATCC 24843) (Fission yeast).